The following is a 490-amino-acid chain: uncharacterized protein (490 aa).

A compositionally biased stretch (low complexity) spans 370-385 (FSMKRPSSSSSSLSGS). A disordered region spans residues 370–406 (FSMKRPSSSSSSLSGSWHGDTENSVKQSLASPSEASL). Residues 391–406 (ENSVKQSLASPSEASL) show a composition bias toward polar residues.

It localises to the cytoplasm. The protein resides in the nucleus. This is an uncharacterized protein from Schizosaccharomyces pombe (strain 972 / ATCC 24843) (Fission yeast).